The following is a 589-amino-acid chain: uncharacterized protein (589 aa).

The next 14 helical transmembrane spans lie at 90 to 110 (YIVI…QTVI), 128 to 148 (SWIG…CGIM), 162 to 182 (IVLF…LWLV), 189 to 209 (GIGG…ITPL), 217 to 237 (GCMG…GGAI), 245 to 265 (WIFF…IFFL), 284 to 304 (FVGI…LNIG), 311 to 331 (AHAN…GFVV), 355 to 375 (VMVT…YIPV), 390 to 410 (VHTL…GMGI), 419 to 439 (PMIG…AIYY), 448 to 468 (GFLA…LIAV), 483 to 503 (AFML…AVIY), and 545 to 565 (IRMI…LSFF).

The protein belongs to the major facilitator superfamily. TCR/Tet family.

It localises to the membrane. This is an uncharacterized protein from Schizosaccharomyces pombe (strain 972 / ATCC 24843) (Fission yeast).